A 443-amino-acid chain; its full sequence is Methyl-coenzyme M reductase I subunit beta (443 aa).

Y367 contacts coenzyme M. A coenzyme B-binding site is contributed by G369.

This sequence belongs to the methyl-coenzyme M reductase beta subunit family. As to quaternary structure, MCR is a hexamer of two alpha, two beta, and two gamma chains, forming a dimer of heterotrimers. Coenzyme F430 is required as a cofactor.

The protein resides in the cytoplasm. It catalyses the reaction coenzyme B + methyl-coenzyme M = methane + coenzyme M-coenzyme B heterodisulfide. It participates in one-carbon metabolism; methyl-coenzyme M reduction; methane from methyl-coenzyme M: step 1/1. Its activity is regulated as follows. Methyl-coenzyme M reductase activity is inhibited by 3-nitrooxypropanol (3-NOP) in vitro and in vivo, by oxidation of its active site Ni(I), which stops both growth and methanogenesis. Is also inhibited by the reaction product CoM-S-S-CoB. Functionally, component of the methyl-coenzyme M reductase (MCR) I that catalyzes the reductive cleavage of methyl-coenzyme M (CoM-S-CH3 or 2-(methylthio)ethanesulfonate) using coenzyme B (CoB or 7-mercaptoheptanoylthreonine phosphate) as reductant which results in the production of methane and the mixed heterodisulfide of CoB and CoM (CoM-S-S-CoB). This is the final step in methanogenesis. Neither N-6-mercaptohexanoylthreonine phosphate (H-S-HxoTP) nor N-8-mercaptooctanoylthreonine phosphate (H-SOcoTP) nor any other thiol compound such as CoA or CoM can substitute for CoB as the electron donor. This chain is Methyl-coenzyme M reductase I subunit beta (mcrB), found in Methanothermobacter marburgensis (strain ATCC BAA-927 / DSM 2133 / JCM 14651 / NBRC 100331 / OCM 82 / Marburg) (Methanobacterium thermoautotrophicum).